The following is a 345-amino-acid chain: 4-hydroxyproline 2-epimerase 1 (345 aa).

Residue Gln85 participates in substrate binding. Residue Ser93 is the Proton acceptor of the active site. Substrate is bound by residues 94–95 and Asp251; that span reads GS. The Proton donor role is filled by Cys255. Substrate is bound at residue 256 to 257; that stretch reads GT.

This sequence belongs to the proline racemase family.

It catalyses the reaction trans-4-hydroxy-L-proline = cis-4-hydroxy-D-proline. Functionally, catalyzes the epimerization of trans-4-hydroxy-L-proline (t4LHyp) to cis-4-hydroxy-D-proline (c4DHyp). May be involved in a degradation pathway of t4LHyp. Can also catalyze the epimerization of trans-3-hydroxy-L-proline (t3LHyp) to cis-3-hydroxy-D-proline (c3DHyp) in vitro. Displays no proline racemase activity. The polypeptide is 4-hydroxyproline 2-epimerase 1 (Rhizobium rhizogenes (strain K84 / ATCC BAA-868) (Agrobacterium radiobacter)).